The chain runs to 144 residues: Large ribosomal subunit protein uL16 (144 aa).

Belongs to the universal ribosomal protein uL16 family. Part of the 50S ribosomal subunit.

Functionally, binds 23S rRNA and is also seen to make contacts with the A and possibly P site tRNAs. This Bacillus anthracis (strain A0248) protein is Large ribosomal subunit protein uL16.